The following is a 69-amino-acid chain: Protein transport protein Sec61 subunit gamma (69 aa).

The Cytoplasmic portion of the chain corresponds to 1 to 32 (MDAVDSVVDPLREFAKDSVRLVKRCHKPDRKE). A helical membrane pass occupies residues 33–61 (FTKVAARTAIGFVVMGFVGFFVKLIFIPI). The Extracellular segment spans residues 62–69 (NNIIVGSG).

This sequence belongs to the SecE/SEC61-gamma family. As to quaternary structure, heterotrimeric complex composed of SEC61-alpha, SEC61-beta and SEC61-gamma.

The protein resides in the endoplasmic reticulum membrane. In terms of biological role, necessary for protein translocation in the endoplasmic reticulum. This chain is Protein transport protein Sec61 subunit gamma, found in Oryza sativa subsp. japonica (Rice).